Here is a 427-residue protein sequence, read N- to C-terminus: 3-phosphoshikimate 1-carboxyvinyltransferase (427 aa).

Residues Lys20, Ser21, and Arg25 each coordinate 3-phosphoshikimate. A phosphoenolpyruvate-binding site is contributed by Lys20. Positions 92 and 120 each coordinate phosphoenolpyruvate. Residues Ser166, Gln168, Asp312, and Lys339 each coordinate 3-phosphoshikimate. A phosphoenolpyruvate-binding site is contributed by Gln168. The Proton acceptor role is filled by Asp312. Arg343 and Arg385 together coordinate phosphoenolpyruvate.

Belongs to the EPSP synthase family. Monomer.

The protein resides in the cytoplasm. It carries out the reaction 3-phosphoshikimate + phosphoenolpyruvate = 5-O-(1-carboxyvinyl)-3-phosphoshikimate + phosphate. The protein operates within metabolic intermediate biosynthesis; chorismate biosynthesis; chorismate from D-erythrose 4-phosphate and phosphoenolpyruvate: step 6/7. Functionally, catalyzes the transfer of the enolpyruvyl moiety of phosphoenolpyruvate (PEP) to the 5-hydroxyl of shikimate-3-phosphate (S3P) to produce enolpyruvyl shikimate-3-phosphate and inorganic phosphate. The polypeptide is 3-phosphoshikimate 1-carboxyvinyltransferase (Streptococcus pyogenes serotype M4 (strain MGAS10750)).